Consider the following 122-residue polypeptide: uncharacterized protein (122 aa).

2 helical membrane passes run 9-29 and 60-80; these read VATVDAIFAISSSTFLWSTWV and LFSFTSVLTVSTFTFASCLIM.

The protein localises to the cytoplasm. The protein resides in the membrane. This is an uncharacterized protein from Schizosaccharomyces pombe (strain 972 / ATCC 24843) (Fission yeast).